The primary structure comprises 391 residues: MKFIDEALIRVEAGDGGNGCVSFRREKYIPKGGPDGGDGGDGGDVYLIADENLNTLIDYRFEKRYAAGRGENGRSAGCTGHRGNDITLRVPVGTRAIDNDTQEVIGDLTKHGMKMLVAKGGYHGLGNTRFKSSVNRAPRQKTNGTPGEKRDLLLELMLLADVGMLGLPNAGKSTFIRAVSAAKPKVADYPFTTLVPSLGVARVGADRSFVVADIPGLIEGAADGAGLGIRFLKHLERCRVLIHLVDIMPIDESDPAQNISVIESELYQYSEKLSEKPTWLVFNKIDTIGEEEAQARAQEIAEQIGWEGDYYLISAATGQNVQNLTRDIMDFIEANPREVAEENTEADEVKFKWDDYHQQAMQNPIEEDWDDFDDDWSEEDEEGVEFVYTRS.

Positions 1–159 constitute an Obg domain; sequence MKFIDEALIR…RDLLLELMLL (159 aa). The OBG-type G domain maps to 160–333; that stretch reads ADVGMLGLPN…LTRDIMDFIE (174 aa). Residues 166–173, 191–195, 213–216, 283–286, and 314–316 each bind GTP; these read GLPNAGKS, FTTLV, DIPG, NKID, and SAA. Residues Ser173 and Thr193 each coordinate Mg(2+).

The protein belongs to the TRAFAC class OBG-HflX-like GTPase superfamily. OBG GTPase family. As to quaternary structure, monomer. Mg(2+) is required as a cofactor.

Its subcellular location is the cytoplasm. Its function is as follows. An essential GTPase which binds GTP, GDP and possibly (p)ppGpp with moderate affinity, with high nucleotide exchange rates and a fairly low GTP hydrolysis rate. Plays a role in control of the cell cycle, stress response, ribosome biogenesis and in those bacteria that undergo differentiation, in morphogenesis control. The polypeptide is GTPase Obg (Actinobacillus pleuropneumoniae serotype 7 (strain AP76)).